Consider the following 541-residue polypeptide: Coiled-coil domain-containing protein 116 (541 aa).

Residues 79–102 (QVLDSLQTVVEQATERLAAMKTEA) adopt a coiled-coil conformation. Residues 346-397 (LPGNSDLLQPSSKASIPTNREARGEPCDSLTTAYSPKTSHRKSKGRRGSPPN) are disordered. Positions 351–363 (DLLQPSSKASIPT) are enriched in polar residues. The segment covering 383-392 (TSHRKSKGRR) has biased composition (basic residues). S394 carries the phosphoserine modification.

It is found in the cytoplasm. It localises to the cytoskeleton. The protein resides in the microtubule organizing center. Its subcellular location is the centrosome. This Mus musculus (Mouse) protein is Coiled-coil domain-containing protein 116 (Ccdc116).